The chain runs to 603 residues: Elongation factor 4 (603 aa).

Positions 7-191 (DNIRNFSIVA…AIVTRLPPPK (185 aa)) constitute a tr-type G domain. GTP-binding positions include 19–24 (DHGKST) and 138–141 (NKVD).

This sequence belongs to the TRAFAC class translation factor GTPase superfamily. Classic translation factor GTPase family. LepA subfamily.

It is found in the cell inner membrane. It carries out the reaction GTP + H2O = GDP + phosphate + H(+). Required for accurate and efficient protein synthesis under certain stress conditions. May act as a fidelity factor of the translation reaction, by catalyzing a one-codon backward translocation of tRNAs on improperly translocated ribosomes. Back-translocation proceeds from a post-translocation (POST) complex to a pre-translocation (PRE) complex, thus giving elongation factor G a second chance to translocate the tRNAs correctly. Binds to ribosomes in a GTP-dependent manner. In Rhodopseudomonas palustris (strain ATCC BAA-98 / CGA009), this protein is Elongation factor 4.